Consider the following 545-residue polypeptide: Chaperonin GroEL (545 aa).

ATP is bound by residues 29-32, K50, 86-90, G414, 477-479, and D493; these read TMGP, DGTTT, and DAA.

It belongs to the chaperonin (HSP60) family. As to quaternary structure, forms a cylinder of 14 subunits composed of two heptameric rings stacked back-to-back. Interacts with the co-chaperonin GroES.

It localises to the cytoplasm. It catalyses the reaction ATP + H2O + a folded polypeptide = ADP + phosphate + an unfolded polypeptide.. Together with its co-chaperonin GroES, plays an essential role in assisting protein folding. The GroEL-GroES system forms a nano-cage that allows encapsulation of the non-native substrate proteins and provides a physical environment optimized to promote and accelerate protein folding. The sequence is that of Chaperonin GroEL from Campylobacter jejuni subsp. jejuni serotype O:6 (strain 81116 / NCTC 11828).